A 40-amino-acid chain; its full sequence is Large ribosomal subunit protein bL36B (40 aa).

The protein belongs to the bacterial ribosomal protein bL36 family.

In Streptomyces coelicolor (strain ATCC BAA-471 / A3(2) / M145), this protein is Large ribosomal subunit protein bL36B.